A 345-amino-acid chain; its full sequence is Holliday junction branch migration complex subunit RuvB (345 aa).

The interval 1–22 (MIETDALSGGTPRRLVTQQPLS) is disordered. Positions 4-193 (TDALSGGTPR…FGIVARLEFY (190 aa)) are large ATPase domain (RuvB-L). ATP contacts are provided by residues L32, R33, G74, K77, T78, T79, 140-142 (EDY), R183, Y193, and R230. T78 lines the Mg(2+) pocket. The small ATPAse domain (RuvB-S) stretch occupies residues 194–264 (TPEELTRIVR…VADAALSMLD (71 aa)). Residues 267–345 (PAGLDVMDRK…HFGFVPPERV (79 aa)) are head domain (RuvB-H). DNA is bound by residues R322 and R327.

Belongs to the RuvB family. As to quaternary structure, homohexamer. Forms an RuvA(8)-RuvB(12)-Holliday junction (HJ) complex. HJ DNA is sandwiched between 2 RuvA tetramers; dsDNA enters through RuvA and exits via RuvB. An RuvB hexamer assembles on each DNA strand where it exits the tetramer. Each RuvB hexamer is contacted by two RuvA subunits (via domain III) on 2 adjacent RuvB subunits; this complex drives branch migration. In the full resolvosome a probable DNA-RuvA(4)-RuvB(12)-RuvC(2) complex forms which resolves the HJ.

Its subcellular location is the cytoplasm. The enzyme catalyses ATP + H2O = ADP + phosphate + H(+). Functionally, the RuvA-RuvB-RuvC complex processes Holliday junction (HJ) DNA during genetic recombination and DNA repair, while the RuvA-RuvB complex plays an important role in the rescue of blocked DNA replication forks via replication fork reversal (RFR). RuvA specifically binds to HJ cruciform DNA, conferring on it an open structure. The RuvB hexamer acts as an ATP-dependent pump, pulling dsDNA into and through the RuvAB complex. RuvB forms 2 homohexamers on either side of HJ DNA bound by 1 or 2 RuvA tetramers; 4 subunits per hexamer contact DNA at a time. Coordinated motions by a converter formed by DNA-disengaged RuvB subunits stimulates ATP hydrolysis and nucleotide exchange. Immobilization of the converter enables RuvB to convert the ATP-contained energy into a lever motion, pulling 2 nucleotides of DNA out of the RuvA tetramer per ATP hydrolyzed, thus driving DNA branch migration. The RuvB motors rotate together with the DNA substrate, which together with the progressing nucleotide cycle form the mechanistic basis for DNA recombination by continuous HJ branch migration. Branch migration allows RuvC to scan DNA until it finds its consensus sequence, where it cleaves and resolves cruciform DNA. This is Holliday junction branch migration complex subunit RuvB from Laribacter hongkongensis (strain HLHK9).